We begin with the raw amino-acid sequence, 427 residues long: Branched-chain-amino-acid aminotransferase, mitochondrial (427 aa).

Residues 1–47 (MSLMFLRRAGNIKGRNIRFALQRGSVGYSQQSSEACKNFLNTTQLRT) constitute a mitochondrion transit peptide. Position 256 is an N6-(pyridoxal phosphate)lysine (K256).

Belongs to the class-IV pyridoxal-phosphate-dependent aminotransferase family. Pyridoxal 5'-phosphate is required as a cofactor.

Its subcellular location is the mitochondrion. It localises to the nucleus. It is found in the cytoplasm. It carries out the reaction L-leucine + 2-oxoglutarate = 4-methyl-2-oxopentanoate + L-glutamate. It catalyses the reaction L-isoleucine + 2-oxoglutarate = (S)-3-methyl-2-oxopentanoate + L-glutamate. The catalysed reaction is L-valine + 2-oxoglutarate = 3-methyl-2-oxobutanoate + L-glutamate. Catalyzes the first reaction in the catabolism of the essential branched chain amino acids leucine, isoleucine, and valine. The chain is Branched-chain-amino-acid aminotransferase, mitochondrial (eca39) from Schizosaccharomyces pombe (strain 972 / ATCC 24843) (Fission yeast).